We begin with the raw amino-acid sequence, 408 residues long: MWAFPELPMPLLVNLIGSLMGFVATVTLIPAFRGHFIAARLCGQDLNKSSREQIPESQGVISGAVFLIILFCFIPFPFLNCFVEQQCKAFPHHEFVALIGALLAICCMIFLGFADDVLNLRWRHKLLLPTAASLPLLMVYFTNFGNTTIVVPKPLRPILGLHLDLGILYYVYMGLLAVFCTNAINILAGINGLEAGQSLVISASIIVFNLVELDGDYRDDHIFSLYFMIPFFFTTLGLLYHNWYPSRVFVGDTFCYFAGMTFAVVGILGHFSKTMLLFFMPQVFNFLYSLPQLLHIIPCPRHRMPRLNTKTGKLEMSYSKFKTKSLSFLGTFILKVAENLGLLTVRHSEDEDGAFTECNNMTLINLLLKVFGPMHERNLTLLLLLLQVVGSAVTFSIRYQLVRLFYDV.

The Lumenal segment spans residues 1-10 (MWAFPELPMP). The chain crosses the membrane as a helical span at residues 11–38 (LLVNLIGSLMGFVATVTLIPAFRGHFIA). The Cytoplasmic segment spans residues 39–58 (ARLCGQDLNKSSREQIPESQ). Residues 44–46 (QDL) and Glu-56 contribute to the UDP-N-acetyl-alpha-D-glucosamine site. Residues 59–78 (GVISGAVFLIILFCFIPFPF) form a helical membrane-spanning segment. The Lumenal segment spans residues 79 to 91 (LNCFVEQQCKAFP). Residues 92-118 (HHEFVALIGALLAICCMIFLGFADDVL) traverse the membrane as a helical segment. Residues 119-121 (NLR) are Cytoplasmic-facing. A helical transmembrane segment spans residues 122–143 (WRHKLLLPTAASLPLLMVYFTN). Lys-125 serves as a coordination point for dolichyl phosphate. Topologically, residues 144 to 166 (FGNTTIVVPKPLRPILGLHLDLG) are lumenal. N-linked (GlcNAc...) asparagine glycosylation is present at Asn-146. Residues 167–186 (ILYYVYMGLLAVFCTNAINI) traverse the membrane as a helical segment. 178 to 186 (VFCTNAINI) serves as a coordination point for dolichyl phosphate. Asn-185 contacts Mg(2+). Topologically, residues 187 to 192 (LAGING) are cytoplasmic. Asn-191 serves as a coordination point for UDP-N-acetyl-alpha-D-glucosamine. Residues 193–213 (LEAGQSLVISASIIVFNLVEL) traverse the membrane as a helical segment. The Lumenal portion of the chain corresponds to 214–218 (DGDYR). Residues 219-242 (DDHIFSLYFMIPFFFTTLGLLYHN) traverse the membrane as a helical segment. Over 243 to 250 (WYPSRVFV) the chain is Cytoplasmic. Residues 251–269 (GDTFCYFAGMTFAVVGILG) traverse the membrane as a helical segment. A Mg(2+)-binding site is contributed by Asp-252. Residues 270–271 (HF) are Lumenal-facing. A helical transmembrane segment spans residues 272–293 (SKTMLLFFMPQVFNFLYSLPQL). Topologically, residues 294–375 (LHIIPCPRHR…LLLKVFGPMH (82 aa)) are cytoplasmic. 301-303 (RHR) serves as a coordination point for UDP-N-acetyl-alpha-D-glucosamine. Residues 376-400 (ERNLTLLLLLLQVVGSAVTFSIRYQ) traverse the membrane as a helical segment. Over 401 to 408 (LVRLFYDV) the chain is Lumenal.

This sequence belongs to the glycosyltransferase 4 family. In terms of assembly, homodimer. It depends on Mg(2+) as a cofactor.

It localises to the endoplasmic reticulum membrane. The catalysed reaction is a di-trans,poly-cis-dolichyl phosphate + UDP-N-acetyl-alpha-D-glucosamine = an N-acetyl-alpha-D-glucosaminyl-diphospho-di-trans,poly-cis-dolichol + UMP. Its pathway is protein modification; protein glycosylation. Inhibited by natural nucleoside antibiotic tunicamycin, which acts as a structural analog and competitor of UDP-GlcNAc. Activated by Man-P-Dol. Activated by manganese. Inhibited by diumycin. Its function is as follows. UDP-N-acetylglucosamine--dolichyl-phosphate N-acetylglucosaminephosphotransferase that operates in the biosynthetic pathway of dolichol-linked oligosaccharides, the glycan precursors employed in protein asparagine (N)-glycosylation. The assembly of dolichol-linked oligosaccharides begins on the cytosolic side of the endoplasmic reticulum membrane and finishes in its lumen. The sequential addition of sugars to dolichol pyrophosphate produces dolichol-linked oligosaccharides containing fourteen sugars, including two GlcNAcs, nine mannoses and three glucoses. Once assembled, the oligosaccharide is transferred from the lipid to nascent proteins by oligosaccharyltransferases. Catalyzes the initial step of dolichol-linked oligosaccharide biosynthesis, transfering GlcNAc-1-P from cytosolic UDP-GlcNAc onto the carrier lipid dolichyl phosphate (P-dolichol), yielding GlcNAc-P-P-dolichol embedded in the cytoplasmic leaflet of the endoplasmic reticulum membrane. This Bos taurus (Bovine) protein is UDP-N-acetylglucosamine--dolichyl-phosphate N-acetylglucosaminephosphotransferase.